The primary structure comprises 101 residues: Large ribosomal subunit protein uL24 (101 aa).

It belongs to the universal ribosomal protein uL24 family. In terms of assembly, part of the 50S ribosomal subunit.

In terms of biological role, one of two assembly initiator proteins, it binds directly to the 5'-end of the 23S rRNA, where it nucleates assembly of the 50S subunit. Functionally, one of the proteins that surrounds the polypeptide exit tunnel on the outside of the subunit. The sequence is that of Large ribosomal subunit protein uL24 from Streptococcus thermophilus (strain CNRZ 1066).